We begin with the raw amino-acid sequence, 113 residues long: Dolichyl-diphosphooligosaccharide--protein glycosyltransferase subunit DAD1 (113 aa).

S2 is modified (N-acetylserine). Residues 2 to 30 are Cytoplasmic-facing; the sequence is SASVVSVISRFLEEYLSSTPQRLKLLDAY. Residues 31–51 form a helical membrane-spanning segment; it reads LLYILLTGALQFGYCLLVGTF. A topological domain (lumenal) is located at residue P52. The helical transmembrane segment at 53–73 threads the bilayer; the sequence is FNSFLSGFISCVGSFILAVRL. Over 74–92 the chain is Cytoplasmic; the sequence is RIQINPQNKADFQGISPER. A helical membrane pass occupies residues 93 to 113; it reads AFADFLFASTILHLVVMNFVG.

The protein belongs to the DAD/OST2 family. Component of the oligosaccharyltransferase (OST) complex. OST exists in two different complex forms which contain common core subunits RPN1, RPN2, OST48, OST4, DAD1 and TMEM258, either STT3A or STT3B as catalytic subunits, and form-specific accessory subunits. STT3A complex assembly occurs through the formation of 3 subcomplexes. Subcomplex 1 contains RPN1 and TMEM258, subcomplex 2 contains the STT3A-specific subunits STT3A, DC2/OSTC, and KCP2 as well as the core subunit OST4, and subcomplex 3 contains RPN2, DAD1, and OST48. The STT3A complex can form stable complexes with the Sec61 complex or with both the Sec61 and TRAP complexes.

It is found in the endoplasmic reticulum membrane. It participates in protein modification; protein glycosylation. Its function is as follows. Subunit of the oligosaccharyl transferase (OST) complex that catalyzes the initial transfer of a defined glycan (Glc(3)Man(9)GlcNAc(2) in eukaryotes) from the lipid carrier dolichol-pyrophosphate to an asparagine residue within an Asn-X-Ser/Thr consensus motif in nascent polypeptide chains, the first step in protein N-glycosylation. N-glycosylation occurs cotranslationally and the complex associates with the Sec61 complex at the channel-forming translocon complex that mediates protein translocation across the endoplasmic reticulum (ER). All subunits are required for a maximal enzyme activity. This chain is Dolichyl-diphosphooligosaccharide--protein glycosyltransferase subunit DAD1, found in Pongo abelii (Sumatran orangutan).